The primary structure comprises 64 residues: Large ribosomal subunit protein bL35 (64 aa).

The tract at residues 1–25 is disordered; the sequence is MPKMKTHRGAAKRLKKTGTGKLKRA.

Belongs to the bacterial ribosomal protein bL35 family.

This chain is Large ribosomal subunit protein bL35, found in Clostridioides difficile (strain 630) (Peptoclostridium difficile).